The primary structure comprises 660 residues: Arginine--tRNA ligase, cytoplasmic (660 aa).

M1 is subject to N-acetylmethionine. The interval 1–72 is could be involved in the assembly of the multisynthetase complex; the sequence is MDGLVAQCSA…QAERKRPTKN (72 aa). L-arginine is bound by residues 200 to 202, H211, Y384, D388, and Q412; that span reads SPN. Residues 201 to 212 carry the 'HIGH' region motif; it reads PNIAKEMHVGHL. The segment at 529 to 543 is interaction with tRNA; sequence NTAAYLLYAFTRIRS.

This sequence belongs to the class-I aminoacyl-tRNA synthetase family. In terms of assembly, interacts (via N-terminus) with AIMP1 (via N-terminus); this stimulates its catalytic activity. Interacts (via N-terminus) with LARS2 (via C-terminus). Monomer. Part of a multisubunit complex that groups tRNA ligases for Arg (RARS1), Asp (DARS1), Gln (QARS1), Ile (IARS1), Leu (LARS1), Lys (KARS1), Met (MARS1) the bifunctional ligase for Glu and Pro (EPRS1) and the auxiliary subunits AIMP1/p43, AIMP2/p38 and EEF1E1/p18. Interacts with QARS1. Part of a complex composed of RARS1, QARS1 and AIMP1. In terms of tissue distribution, detected in dorsal root ganglion.

The protein resides in the cytoplasm. Its subcellular location is the cytosol. The catalysed reaction is tRNA(Arg) + L-arginine + ATP = L-arginyl-tRNA(Arg) + AMP + diphosphate. Its function is as follows. Forms part of a macromolecular complex that catalyzes the attachment of specific amino acids to cognate tRNAs during protein synthesis. Modulates the secretion of AIMP1 and may be involved in generation of the inflammatory cytokine EMAP2 from AIMP1. The chain is Arginine--tRNA ligase, cytoplasmic (Rars1) from Rattus norvegicus (Rat).